Here is a 148-residue protein sequence, read N- to C-terminus: Cytochrome c oxidase subunit 6, mitochondrial (148 aa).

Residues Met-1–Arg-40 constitute a mitochondrion transit peptide.

This sequence belongs to the cytochrome c oxidase subunit 5A family. In terms of assembly, component of the cytochrome c oxidase (complex IV, CIV), a multisubunit enzyme composed of 11 subunits. The complex is composed of a catalytic core of 3 subunits Cox1, Cox2 and Cox3, encoded in the mitochondrial DNA, and 8 supernumerary subunits Cox4, Cox5a/Cox5, Cox6, Cox7, Cox8, Cox7a/Cox9, Cox6b/Cox12 and Cox6a/Cox13, which are encoded in the nuclear genome. The complex exists as a monomer or a dimer and forms respiratory supercomplexes (SCs) in the inner mitochondrial membrane with NADH-ubiquinone oxidoreductase (complex I, CI) and ubiquinol-cytochrome c oxidoreductase (cytochrome b-c1 complex, complex III, CIII), resulting in various different assemblies (supercomplexes I(1)IV(1), I(1)III(3)IV(2), III(2)IV(1) and III(2)IV(2) as well as larger supercomplexes of compositions like I(1)III(2)IV(5-6)).

Its subcellular location is the mitochondrion inner membrane. The protein operates within energy metabolism; oxidative phosphorylation. Its function is as follows. Component of the cytochrome c oxidase, the last enzyme in the mitochondrial electron transport chain which drives oxidative phosphorylation. The respiratory chain contains 3 multisubunit complexes succinate dehydrogenase (complex II, CII), ubiquinol-cytochrome c oxidoreductase (cytochrome b-c1 complex, complex III, CIII) and cytochrome c oxidase (complex IV, CIV), that cooperate to transfer electrons derived from NADH and succinate to molecular oxygen, creating an electrochemical gradient over the inner membrane that drives transmembrane transport and the ATP synthase. Cytochrome c oxidase is the component of the respiratory chain that catalyzes the reduction of oxygen to water. Electrons originating from reduced cytochrome c in the intermembrane space (IMS) are transferred via the dinuclear copper A center (CU(A)) of Cox2 and heme A of Cox1 to the active site in Cox1, a binuclear center (BNC) formed by heme A3 and copper B (CU(B)). The BNC reduces molecular oxygen to 2 water molecules using 4 electrons from cytochrome c in the IMS and 4 protons from the mitochondrial matrix. This chain is Cytochrome c oxidase subunit 6, mitochondrial (cox-6), found in Neurospora crassa (strain ATCC 24698 / 74-OR23-1A / CBS 708.71 / DSM 1257 / FGSC 987).